Consider the following 836-residue polypeptide: Glutamate receptor ionotropic, kainate glr-3 (836 aa).

A signal peptide spans Met1–Cys19. Topologically, residues Tyr20–Thr523 are extracellular. Cys76 and Cys320 are joined by a disulfide. 5 N-linked (GlcNAc...) asparagine glycosylation sites follow: Asn225, Asn257, Asn356, Asn391, and Asn419. L-glutamate is bound by residues Ser478 to Thr480 and Arg485. The helical transmembrane segment at Gln524 to Ala544 threads the bilayer. At Lys545–Gly600 the chain is on the cytoplasmic side. The helical transmembrane segment at Ile601–Leu621 threads the bilayer. Residues Thr622 to Ser780 lie on the Extracellular side of the membrane. Ser651–Thr652 is a binding site for L-glutamate. An N-linked (GlcNAc...) asparagine glycan is attached at Asn657. Glu699 provides a ligand contact to L-glutamate. The helical transmembrane segment at Ile781 to Phe801 threads the bilayer. Over Glu802–Asn836 the chain is Cytoplasmic.

It belongs to the glutamate-gated ion channel (TC 1.A.10.1) family. In terms of tissue distribution, expressed in the intestine and in the ASER neuron. Also expressed in the thermosensitive RIA interneuron.

The protein localises to the cell membrane. The protein resides in the postsynaptic cell membrane. With respect to regulation, activated by low temperature of 18 degrees Celsius in ASER neuron. Ionotropic glutamate receptor. Activation by glutamate requires additional verification. L-glutamate acts as an excitatory neurotransmitter at many synapses in the central nervous system. Binding of the excitatory neurotransmitter L-glutamate induces a conformation change, leading to the opening of the cation channel, and thereby converts the chemical signal to an electrical impulse. The receptor then desensitizes rapidly and enters a transient inactive state, characterized by the presence of bound agonist. Its function is as follows. Independent of its ionotropic glutamate receptor activity, acts as a thermoreceptor in the ASER neuron where it triggers a calcium response to activate cold avoidance behavior in response to temperatures below 19 degrees Celsius. Possibly functions as a metabotropic cold receptor and acts upstream of the G(o) G protein goa-1 in the ASER neuron. Also functions in cold sensing in the intestine. The chain is Glutamate receptor ionotropic, kainate glr-3 from Caenorhabditis elegans.